Here is an 828-residue protein sequence, read N- to C-terminus: Glycerol-3-phosphate acyltransferase (828 aa).

An HXXXXD motif motif is present at residues 309-314 (CHRSHI).

Belongs to the GPAT/DAPAT family.

Its subcellular location is the cell inner membrane. The enzyme catalyses sn-glycerol 3-phosphate + an acyl-CoA = a 1-acyl-sn-glycero-3-phosphate + CoA. The protein operates within phospholipid metabolism; CDP-diacylglycerol biosynthesis; CDP-diacylglycerol from sn-glycerol 3-phosphate: step 1/3. This Pseudomonas entomophila (strain L48) protein is Glycerol-3-phosphate acyltransferase.